We begin with the raw amino-acid sequence, 168 residues long: tRNA-splicing endonuclease (168 aa).

Catalysis depends on residues Y107, H114, and K145.

It belongs to the tRNA-intron endonuclease family. Archaeal short subfamily. In terms of assembly, homotetramer; although the tetramer contains four active sites, only two participate in the cleavage. Therefore, it should be considered as a dimer of dimers.

The catalysed reaction is pretRNA = a 3'-half-tRNA molecule with a 5'-OH end + a 5'-half-tRNA molecule with a 2',3'-cyclic phosphate end + an intron with a 2',3'-cyclic phosphate and a 5'-hydroxyl terminus.. Its function is as follows. Endonuclease that removes tRNA introns. Cleaves pre-tRNA at the 5'- and 3'-splice sites to release the intron. The products are an intron and two tRNA half-molecules bearing 2',3' cyclic phosphate and 5'-OH termini. Recognizes a pseudosymmetric substrate in which 2 bulged loops of 3 bases are separated by a stem of 4 bp. The protein is tRNA-splicing endonuclease of Thermococcus gammatolerans (strain DSM 15229 / JCM 11827 / EJ3).